A 209-amino-acid polypeptide reads, in one-letter code: Large ribosomal subunit protein uL4 (209 aa).

It belongs to the universal ribosomal protein uL4 family. In terms of assembly, part of the 50S ribosomal subunit.

Functionally, one of the primary rRNA binding proteins, this protein initially binds near the 5'-end of the 23S rRNA. It is important during the early stages of 50S assembly. It makes multiple contacts with different domains of the 23S rRNA in the assembled 50S subunit and ribosome. Forms part of the polypeptide exit tunnel. The polypeptide is Large ribosomal subunit protein uL4 (Borrelia duttonii (strain Ly)).